Reading from the N-terminus, the 785-residue chain is MQQKVLSSLEFHKVKEQITAHAASSLGREKLLQLKPLTDLSDIQKQLDEVEEASAVMRLRGHAPFGGLTDIRSALRRAEIGSVLTPAEFTELSGLLYAVKQMKHFISQMTEDGVGIPLIQAHAEELITLGDLEREINSCIDDHGEVLDHASPALRGIRTQLRTLESRVRDRLESMLRSSSASKMLSDTIVTIRNDRFVIPVKQEYRSSYGGIVHDTSSSGATLFIEPQAIVDMNNSLQQAKVKEKQEIERILRMLTEHTAEHTQEIAQDVEVLQTLDFIFAKARYAKAMKATKPLMNGDGFIRLKKARHPLLPQDQVVANDIELGGDYSTIVITGPNTGGKTVTLKTLGLLTIMAQAGLHIPADEGSEAAVFDNVFADIGDEQSIEQSLSTFSSHMVNIVNILKDVSENSLVLFDELGAGTDPQEGAALAMSILDEVHRTNARVLATTHYPELKAYGYNRQGVMNASVEFDIETLSPTYKLLIGVPGRSNAFEISRRLGLPEHIIGQAKSEMTAEHNEVDLMIASLEKSKKRADEELSETESIRKEAEKLHKDLQQQIIELNAQKDKMMEEAEQKAAEKLEAAANEAEQIIRELRSIKQEHRSFKEHELIDAKKRLGDAMPAFEKSKQPERKTEKKRELKPGDEVKVLTFGQKGALLEKTGEKEWNVQIGILKMKVKEKDLEFLKSAPEPKKEKAITAVKGKDYHVSLELDLRGERYENALSRVEKYLDDAVLAGHPRVSIIHGKGTGALRKGVQDLLKNHRSVKSSRFGEAGEGGSGVTIVELK.

335-342 serves as a coordination point for ATP; it reads GPNTGGKT. One can recognise a Smr domain in the interval 710-785; the sequence is LDLRGERYEN…GSGVTIVELK (76 aa).

It belongs to the DNA mismatch repair MutS family. MutS2 subfamily. In terms of assembly, homodimer. Binds to stalled ribosomes, contacting rRNA.

In terms of biological role, endonuclease that is involved in the suppression of homologous recombination and thus may have a key role in the control of bacterial genetic diversity. Functionally, acts as a ribosome collision sensor, splitting the ribosome into its 2 subunits. Detects stalled/collided 70S ribosomes which it binds and splits by an ATP-hydrolysis driven conformational change. Acts upstream of the ribosome quality control system (RQC), a ribosome-associated complex that mediates the extraction of incompletely synthesized nascent chains from stalled ribosomes and their subsequent degradation. Probably generates substrates for RQC. The chain is Endonuclease MutS2 from Bacillus velezensis (strain DSM 23117 / BGSC 10A6 / LMG 26770 / FZB42) (Bacillus amyloliquefaciens subsp. plantarum).